The sequence spans 227 residues: Cytochrome c oxidase subunit 2 (227 aa).

At 1-14 the chain is on the mitochondrial intermembrane side; it reads MAYPFQLGLQDATS. A helical transmembrane segment spans residues 15–45; it reads PIMEELTNFHDHTLMIVFLISSLVLYIISLM. At 46–59 the chain is on the mitochondrial matrix side; that stretch reads LTTKLTHTSTMDAQ. A helical transmembrane segment spans residues 60–87; it reads EVETIWTILPAVILILIALPSLRILYMM. The Mitochondrial intermembrane portion of the chain corresponds to 88 to 227; sequence DEINNPVLTV…YFENWSASMI (140 aa). Cu cation-binding residues include His161, Cys196, Glu198, Cys200, His204, and Met207. Glu198 serves as a coordination point for Mg(2+). A Phosphotyrosine modification is found at Tyr218.

Belongs to the cytochrome c oxidase subunit 2 family. As to quaternary structure, component of the cytochrome c oxidase (complex IV, CIV), a multisubunit enzyme composed of 14 subunits. The complex is composed of a catalytic core of 3 subunits MT-CO1, MT-CO2 and MT-CO3, encoded in the mitochondrial DNA, and 11 supernumerary subunits COX4I, COX5A, COX5B, COX6A, COX6B, COX6C, COX7A, COX7B, COX7C, COX8 and NDUFA4, which are encoded in the nuclear genome. The complex exists as a monomer or a dimer and forms supercomplexes (SCs) in the inner mitochondrial membrane with NADH-ubiquinone oxidoreductase (complex I, CI) and ubiquinol-cytochrome c oxidoreductase (cytochrome b-c1 complex, complex III, CIII), resulting in different assemblies (supercomplex SCI(1)III(2)IV(1) and megacomplex MCI(2)III(2)IV(2)). Found in a complex with TMEM177, COA6, COX18, COX20, SCO1 and SCO2. Interacts with TMEM177 in a COX20-dependent manner. Interacts with COX20. Interacts with COX16. It depends on Cu cation as a cofactor.

Its subcellular location is the mitochondrion inner membrane. The enzyme catalyses 4 Fe(II)-[cytochrome c] + O2 + 8 H(+)(in) = 4 Fe(III)-[cytochrome c] + 2 H2O + 4 H(+)(out). In terms of biological role, component of the cytochrome c oxidase, the last enzyme in the mitochondrial electron transport chain which drives oxidative phosphorylation. The respiratory chain contains 3 multisubunit complexes succinate dehydrogenase (complex II, CII), ubiquinol-cytochrome c oxidoreductase (cytochrome b-c1 complex, complex III, CIII) and cytochrome c oxidase (complex IV, CIV), that cooperate to transfer electrons derived from NADH and succinate to molecular oxygen, creating an electrochemical gradient over the inner membrane that drives transmembrane transport and the ATP synthase. Cytochrome c oxidase is the component of the respiratory chain that catalyzes the reduction of oxygen to water. Electrons originating from reduced cytochrome c in the intermembrane space (IMS) are transferred via the dinuclear copper A center (CU(A)) of subunit 2 and heme A of subunit 1 to the active site in subunit 1, a binuclear center (BNC) formed by heme A3 and copper B (CU(B)). The BNC reduces molecular oxygen to 2 water molecules using 4 electrons from cytochrome c in the IMS and 4 protons from the mitochondrial matrix. This Rattus norvegicus (Rat) protein is Cytochrome c oxidase subunit 2.